Reading from the N-terminus, the 340-residue chain is NAD kinase (340 aa).

Residue aspartate 66 is the Proton acceptor of the active site. Residues 66-67 (DG), arginine 71, 141-142 (ND), lysine 152, aspartate 171, 182-187 (TAYAFS), and alanine 206 each bind NAD(+). A disordered region spans residues 321 to 340 (AGVAGTEPDKPGERDGKAGS). The segment covering 327–340 (EPDKPGERDGKAGS) has biased composition (basic and acidic residues).

This sequence belongs to the NAD kinase family. It depends on a divalent metal cation as a cofactor.

The protein localises to the cytoplasm. The catalysed reaction is NAD(+) + ATP = ADP + NADP(+) + H(+). Functionally, involved in the regulation of the intracellular balance of NAD and NADP, and is a key enzyme in the biosynthesis of NADP. Catalyzes specifically the phosphorylation on 2'-hydroxyl of the adenosine moiety of NAD to yield NADP. The polypeptide is NAD kinase (Bifidobacterium longum (strain DJO10A)).